A 348-amino-acid polypeptide reads, in one-letter code: PDZ and LIM domain protein 2 (348 aa).

The region spanning M1 to Q84 is the PDZ domain. The interval S67 to G139 is disordered. Positions R103–L118 are enriched in polar residues. Phosphoserine is present on residues S117, S119, and S124. 2 positions are modified to phosphothreonine: T128 and T132. Phosphoserine occurs at positions 133, 153, 191, 197, 198, 202, 209, and 262. The tract at residues G165 to S202 is disordered. Residues G193–S202 show a composition bias toward low complexity. The segment at E249–S275 is disordered. The segment covering L257–S270 has biased composition (low complexity). Residues H280–A340 form the LIM zinc-binding domain.

In terms of assembly, interacts with alpha-actinins ACTN1 and ACTN4, FLNA and MYH9. Interacts (via LIM zinc-binding domain) with MKRN2.

It is found in the cytoplasm. The protein localises to the cytoskeleton. In terms of biological role, probable adapter protein located at the actin cytoskeleton that promotes cell attachment. Necessary for the migratory capacity of epithelial cells. Overexpression enhances cell adhesion to collagen and fibronectin and suppresses anchorage independent growth. May contribute to tumor cell migratory capacity. This Bos taurus (Bovine) protein is PDZ and LIM domain protein 2 (PDLIM2).